The primary structure comprises 425 residues: 3-phosphoshikimate 1-carboxyvinyltransferase (425 aa).

3-phosphoshikimate-binding residues include Lys22, Ser23, and Arg27. A phosphoenolpyruvate-binding site is contributed by Lys22. Residues Gly95 and Arg123 each coordinate phosphoenolpyruvate. Positions 169, 170, 171, 197, 313, 336, and 340 each coordinate 3-phosphoshikimate. Gln171 contacts phosphoenolpyruvate. The active-site Proton acceptor is the Asp313. Phosphoenolpyruvate-binding residues include Arg344, Arg386, and Lys411.

Belongs to the EPSP synthase family. As to quaternary structure, monomer.

Its subcellular location is the cytoplasm. The enzyme catalyses 3-phosphoshikimate + phosphoenolpyruvate = 5-O-(1-carboxyvinyl)-3-phosphoshikimate + phosphate. It participates in metabolic intermediate biosynthesis; chorismate biosynthesis; chorismate from D-erythrose 4-phosphate and phosphoenolpyruvate: step 6/7. Catalyzes the transfer of the enolpyruvyl moiety of phosphoenolpyruvate (PEP) to the 5-hydroxyl of shikimate-3-phosphate (S3P) to produce enolpyruvyl shikimate-3-phosphate and inorganic phosphate. This Marinomonas sp. (strain MWYL1) protein is 3-phosphoshikimate 1-carboxyvinyltransferase.